Here is a 284-residue protein sequence, read N- to C-terminus: Sulfotransferase 4A1 (284 aa).

Phosphothreonine is present on residues Thr-8, Thr-11, and Thr-205.

It belongs to the sulfotransferase 1 family. In terms of tissue distribution, highly expressed in the cerebral cortex and frontal lobe, slightly less in the cerebellum, occipital and temporal lobes, relatively low in the medulla and putamen, and lowest in the spinal cord. No expression detected in the pancreas. Highly expressed in fetal brain and occipital lobe, slightly less in the whole brain, frontal lobe, hippocampus, and lung, very low expression in cerebellum, medulla oblongata, temporal lobe, testis, kidney and appendix.

It is found in the cytoplasm. Atypical sulfotransferase family member with very low affinity for 3'-phospho-5'-adenylyl sulfate (PAPS) and very low catalytic activity towards L-triiodothyronine, thyroxine, estrone, p-nitrophenol, 2-naphthylamine, and 2-beta-naphthol. May have a role in the metabolism of drugs and neurotransmitters in the CNS. The sequence is that of Sulfotransferase 4A1 (SULT4A1) from Homo sapiens (Human).